A 95-amino-acid chain; its full sequence is FXYD domain-containing ion transport regulator 6 (95 aa).

An N-terminal signal peptide occupies residues 1 to 18 (MEVVLLFLCGLLAPAVLA). Residues 19–35 (SATEQEKEKDPFHYDYQ) lie on the Extracellular side of the membrane. The chain crosses the membrane as a helical span at residues 36 to 58 (TLRIGGLVFAVVLFSVGILLILS). Residues 59–95 (RRCKCSFNQKPRAPGDEEAQVENLVTANATEPQKAEN) lie on the Cytoplasmic side of the membrane. Residues 69-95 (PRAPGDEEAQVENLVTANATEPQKAEN) form a disordered region.

This sequence belongs to the FXYD family. In terms of assembly, regulatory subunit of the sodium/potassium-transporting ATPase which is composed of a catalytic alpha subunit, a non-catalytic beta subunit and an additional regulatory subunit. The regulatory subunit, a member of the FXYD protein family, modulates the enzymatic activity in a tissue- and isoform-specific way by changing affinities of the Na+/K+-ATPase toward Na(+), K(+) or ATP.

It localises to the cell membrane. Functionally, associates with and regulates the activity of the sodium/potassium-transporting ATPase (NKA) which catalyzes the hydrolysis of ATP coupled with the exchange of Na(+) and K(+) ions across the plasma membrane. Reduces the apparent affinity for intracellular Na(+) with no change in the apparent affinity for extracellular K(+). In addition to modulating NKA kinetics, may also function as a regulator of NKA localization to the plasma membrane. This is FXYD domain-containing ion transport regulator 6 (FXYD6) from Bos taurus (Bovine).